We begin with the raw amino-acid sequence, 100 residues long: Small ribosomal subunit protein bS18c (100 aa).

A compositionally biased stretch (basic residues) spans 1 to 19 (MDKSKRPFRKSKRSFRRRL). A disordered region spans residues 1 to 23 (MDKSKRPFRKSKRSFRRRLPPIG).

It belongs to the bacterial ribosomal protein bS18 family. Part of the 30S ribosomal subunit.

It is found in the plastid. The protein resides in the chloroplast. This is Small ribosomal subunit protein bS18c from Calycanthus floridus var. glaucus (Eastern sweetshrub).